The chain runs to 410 residues: WD repeat and FYVE domain-containing protein 1 (410 aa).

6 WD repeats span residues 22 to 61 (GHQD…QYWP), 66 to 105 (TMAS…NKMN), 112 to 150 (AHQN…NMLG), 153 to 192 (FFTS…CSVI), 197 to 236 (GHEG…GRTL), and 240 to 279 (GHHD…EEAP). The segment at 281 to 352 (WLESDSCQKC…VCDSCYDSIK (72 aa)) adopts an FYVE-type zinc-finger fold. The Zn(2+) site is built by Cys-287, Cys-290, Cys-314, Cys-317, Cys-322, Cys-325, Cys-344, and Cys-347. The WD 7 repeat unit spans residues 364–403 (EGKHNISHMSMDIARGLMVTCGTDRIVKIWDMTPVVGCSL). Ser-408 carries the phosphoserine modification.

As to quaternary structure, binds PtdIns3P in vitro with high specificity over other phosphoinositides. Interacts (via WD repeat 2) with tyrosine-phosphorylated TLR3 (via TIR domain) in response to poly(I:C). Interacts with TICAM1 in response to poly(I:C). Interacts with TLR4 in response to LPS.

It is found in the early endosome. In terms of biological role, positively regulates TLR3- and TLR4-mediated signaling pathways by bridging the interaction between TLR3 or TLR4 and TICAM1. Promotes TLR3/4 ligand-induced activation of transcription factors IRF3 and NF-kappa-B, as well as the production of IFN-beta and inflammatory cytokines. The sequence is that of WD repeat and FYVE domain-containing protein 1 (WDFY1) from Homo sapiens (Human).